The following is a 458-amino-acid chain: Chondroitin hydrolase (458 aa).

The N-terminal stretch at 1-22 (MVIVWYHQLLLVLLIFIGAAKG) is a signal peptide. In terms of domain architecture, EGF-like spans 358–401 (NLDKCRMERCEGRGECYLPRPKTNPAIYNFACRCERPYFGKSCE). 3 cysteine pairs are disulfide-bonded: C362/C373, C367/C389, and C391/C400.

Belongs to the glycosyl hydrolase 56 family.

In terms of biological role, endo-beta-galactosaminidase that specifically hydrolyzes chondroitin, releasing GlcUA-beta-(1-&gt;3)-GalNAc-beta-(1-&gt;4)-GlcUA-beta-(1-&gt;3)-GalNAc as the main product. Also hydrolyzes to a lesser extent chondroitin sulfates (CS-A, CS-C) and hyaluronic acid. May regulate the function of chondroitin in cell division. This chain is Chondroitin hydrolase, found in Caenorhabditis elegans.